The primary structure comprises 224 residues: Ribosome maturation factor RimP (224 aa).

A disordered region spans residues 194–224 (REGRIPGDDLGSEEAGEQSDETASGEAEDKE). The segment covering 203 to 213 (LGSEEAGEQSD) has biased composition (acidic residues).

The protein belongs to the RimP family.

The protein localises to the cytoplasm. Functionally, required for maturation of 30S ribosomal subunits. The protein is Ribosome maturation factor RimP of Brucella anthropi (strain ATCC 49188 / DSM 6882 / CCUG 24695 / JCM 21032 / LMG 3331 / NBRC 15819 / NCTC 12168 / Alc 37) (Ochrobactrum anthropi).